A 363-amino-acid chain; its full sequence is UDP-N-acetylglucosamine--N-acetylmuramyl-(pentapeptide) pyrophosphoryl-undecaprenol N-acetylglucosamine transferase (363 aa).

UDP-N-acetyl-alpha-D-glucosamine-binding positions include 10–12, N124, S195, I250, and Q295; that span reads TGG.

Belongs to the glycosyltransferase 28 family. MurG subfamily.

The protein localises to the cell membrane. The enzyme catalyses di-trans,octa-cis-undecaprenyl diphospho-N-acetyl-alpha-D-muramoyl-L-alanyl-D-glutamyl-meso-2,6-diaminopimeloyl-D-alanyl-D-alanine + UDP-N-acetyl-alpha-D-glucosamine = di-trans,octa-cis-undecaprenyl diphospho-[N-acetyl-alpha-D-glucosaminyl-(1-&gt;4)]-N-acetyl-alpha-D-muramoyl-L-alanyl-D-glutamyl-meso-2,6-diaminopimeloyl-D-alanyl-D-alanine + UDP + H(+). It functions in the pathway cell wall biogenesis; peptidoglycan biosynthesis. Functionally, cell wall formation. Catalyzes the transfer of a GlcNAc subunit on undecaprenyl-pyrophosphoryl-MurNAc-pentapeptide (lipid intermediate I) to form undecaprenyl-pyrophosphoryl-MurNAc-(pentapeptide)GlcNAc (lipid intermediate II). This chain is UDP-N-acetylglucosamine--N-acetylmuramyl-(pentapeptide) pyrophosphoryl-undecaprenol N-acetylglucosamine transferase, found in Listeria welshimeri serovar 6b (strain ATCC 35897 / DSM 20650 / CCUG 15529 / CIP 8149 / NCTC 11857 / SLCC 5334 / V8).